A 172-amino-acid chain; its full sequence is Centrin-1 (172 aa).

The segment at 1-30 (MASSYRKPTVASTSQKRKVGPKPELTEEQK) is disordered. EF-hand domains lie at 28–63 (EQKQ…LGFE), 64–99 (PRKE…KMAE), 101–136 (DTKE…LGEN), and 137–172 (LTDE…TNLY). Ca(2+) is bound by residues D41, D43, S45, T47, and E52. Ca(2+) contacts are provided by D150, D152, D154, E156, and E161.

Belongs to the centrin family. Monomer. Interacts with CIMAP3. Interacts with USP49.

The protein localises to the cytoplasm. It localises to the cytoskeleton. It is found in the microtubule organizing center. Its subcellular location is the centrosome. Functionally, plays a fundamental role in microtubule-organizing center structure and function. Plays a role in sperm cilia formation. This chain is Centrin-1 (CETN1), found in Bos taurus (Bovine).